A 235-amino-acid chain; its full sequence is Ribonuclease S-2 (235 aa).

The first 31 residues, 1-31 (MATVQKSQHSHFFLLVGCIVHLSNFCSTTTA), serve as a signal peptide directing secretion. Gln-41 provides a ligand contact to RNA. Cysteines 47 and 54 form a disulfide. An RNA-binding site is contributed by His-66. Catalysis depends on His-66, which acts as the Proton donor. N-linked (GlcNAc...) asparagine glycosylation is present at Asn-72. 3 disulfide bridges follow: Cys-80–Cys-129, Cys-189–Cys-217, and Cys-200–Cys-211. RNA contacts are provided by residues 105-106 (DL), Arg-108, and Phe-118. Gln-122 is a catalytic residue. 125-126 (KH) provides a ligand contact to RNA. The active-site Proton acceptor is His-126.

The protein belongs to the RNase T2 family.

It localises to the secreted. Its subcellular location is the extracellular space. It catalyses the reaction a ribonucleotidyl-ribonucleotide-RNA + H2O = a 3'-end 3'-phospho-ribonucleotide-RNA + a 5'-end dephospho-ribonucleoside-RNA + H(+). In terms of biological role, self-incompatibility (SI) is the inherited ability of a flowering plant to prevent self-fertilization by discriminating between self and non-self pollen during pollination. In many species, self-incompatibility is controlled by the single, multiallelic locus S. The polypeptide is Ribonuclease S-2 (S2) (Antirrhinum hispanicum (Snapdragon)).